Here is a 696-residue protein sequence, read N- to C-terminus: DNA ligase (696 aa).

NAD(+)-binding positions include 55 to 59 (DYEFD), 105 to 106 (SL), and Glu137. Lys139 (N6-AMP-lysine intermediate) is an active-site residue. NAD(+) is bound by residues Arg160, Glu194, Lys310, and Lys334. Residues Cys428, Cys431, Cys446, and Cys451 each contribute to the Zn(2+) site. The region spanning 615 to 696 (NVNPNFVGKN…EFIELKDKFD (82 aa)) is the BRCT domain.

The protein belongs to the NAD-dependent DNA ligase family. LigA subfamily. Requires Mg(2+) as cofactor. Mn(2+) serves as cofactor.

It catalyses the reaction NAD(+) + (deoxyribonucleotide)n-3'-hydroxyl + 5'-phospho-(deoxyribonucleotide)m = (deoxyribonucleotide)n+m + AMP + beta-nicotinamide D-nucleotide.. In terms of biological role, DNA ligase that catalyzes the formation of phosphodiester linkages between 5'-phosphoryl and 3'-hydroxyl groups in double-stranded DNA using NAD as a coenzyme and as the energy source for the reaction. It is essential for DNA replication and repair of damaged DNA. The chain is DNA ligase from Fusobacterium nucleatum subsp. nucleatum (strain ATCC 25586 / DSM 15643 / BCRC 10681 / CIP 101130 / JCM 8532 / KCTC 2640 / LMG 13131 / VPI 4355).